The chain runs to 362 residues: F-box protein At2g14710 (362 aa).

One can recognise an F-box domain in the interval 1-47 (MAHLKNLPWELIEEILSRVPPKSLVRFRTVSKQWNALFDDKTFINNH).

This chain is F-box protein At2g14710, found in Arabidopsis thaliana (Mouse-ear cress).